A 645-amino-acid polypeptide reads, in one-letter code: 1,4-alpha-glucan branching enzyme GlgB (645 aa).

Asp-309 (nucleophile) is an active-site residue. The Proton donor role is filled by Glu-352. The tract at residues 621–645 (MRKGSKKQDGKKAELRSNATSRRKR) is disordered. Basic and acidic residues predominate over residues 626 to 635 (KKQDGKKAEL).

It belongs to the glycosyl hydrolase 13 family. GlgB subfamily. As to quaternary structure, monomer.

The enzyme catalyses Transfers a segment of a (1-&gt;4)-alpha-D-glucan chain to a primary hydroxy group in a similar glucan chain.. It functions in the pathway glycan biosynthesis; glycogen biosynthesis. Catalyzes the formation of the alpha-1,6-glucosidic linkages in glycogen by scission of a 1,4-alpha-linked oligosaccharide from growing alpha-1,4-glucan chains and the subsequent attachment of the oligosaccharide to the alpha-1,6 position. The sequence is that of 1,4-alpha-glucan branching enzyme GlgB from Bacillus cytotoxicus (strain DSM 22905 / CIP 110041 / 391-98 / NVH 391-98).